We begin with the raw amino-acid sequence, 384 residues long: Probable RNA 3'-terminal phosphate cyclase-like protein (384 aa).

Belongs to the RNA 3'-terminal cyclase family. Type 2 subfamily. As to quaternary structure, part of the small subunit (SSU) processome, composed of more than 70 proteins and the RNA chaperone small nucleolar RNA (snoRNA) U3.

The protein resides in the nucleus. Its subcellular location is the nucleolus. Functionally, part of the small subunit (SSU) processome, first precursor of the small eukaryotic ribosomal subunit. During the assembly of the SSU processome in the nucleolus, many ribosome biogenesis factors, an RNA chaperone and ribosomal proteins associate with the nascent pre-rRNA and work in concert to generate RNA folding, modifications, rearrangements and cleavage as well as targeted degradation of pre-ribosomal RNA by the RNA exosome. Does not have cyclase activity. The sequence is that of Probable RNA 3'-terminal phosphate cyclase-like protein (Rtc1) from Drosophila melanogaster (Fruit fly).